The sequence spans 115 residues: MVLLKISSLLAVLGLLVCQMYSSQAAPARRALEPLPDRVTEAHRLLRALIRELTAEDMEASSSGAAHKRSCDTSTCATQRLADFLSRSGGIGSPDFVPTDVSANSFGRRRRSLHV.

An N-terminal signal peptide occupies residues 1–25; the sequence is MVLLKISSLLAVLGLLVCQMYSSQA. Residues 26-69 constitute a propeptide, removed in mature form by a carboxypeptidase; the sequence is APARRALEPLPDRVTEAHRLLRALIRELTAEDMEASSSGAAHKR. Cysteine 71 and cysteine 76 are oxidised to a cystine. The residue at position 106 (phenylalanine 106) is a Phenylalanine amide. Residues 107–115 constitute a propeptide, removed in mature form by an endoprotease; that stretch reads GRRRRSLHV.

In terms of tissue distribution, skin, intestine and brain.

The protein resides in the secreted. In terms of biological role, CGRP induces vasodilation. It dilates a variety of vessels including the coronary, cerebral and systemic vasculature. Its abundance in the CNS also points toward a neurotransmitter or neuromodulator role. This is Skin calcitonin gene-related peptide from Phyllomedusa bicolor (Two-colored leaf frog).